The sequence spans 397 residues: DnaJ homolog subfamily A member 1 (397 aa).

The J domain occupies 6–68 (TYYDVLGVKP…KKRELYDKGG (63 aa)). N6-acetyllysine is present on Lys66. Ser83 bears the Phosphoserine mark. A CR-type zinc finger spans residues 121–205 (GATRKLALQK…CNGRKIVREK (85 aa)). Zn(2+)-binding residues include Cys134, Cys137, Cys150, Cys153, Cys177, Cys180, Cys193, and Cys196. CXXCXGXG motif repeat units lie at residues 134-141 (CDKCEGRG), 150-157 (CPNCRGTG), 177-184 (CMECQGHG), and 193-200 (CKSCNGRK). Ser335 is modified (phosphoserine). A disordered region spans residues 352-397 (VEETDEMDQVELVDFDPNQERRRHYNGEAYEDDEHHPRGGVQCQTS). Residues 353 to 365 (EETDEMDQVELVD) show a composition bias toward acidic residues. Tyr381 bears the Phosphotyrosine mark. Position 394 is a cysteine methyl ester (Cys394). A lipid anchor (S-farnesyl cysteine) is attached at Cys394. A propeptide spans 395 to 397 (QTS) (removed in mature form).

In terms of assembly, identified in a complex with HSPA1B and BAX. Interacts with RNF207.

The protein localises to the membrane. It localises to the cytoplasm. Its subcellular location is the microsome. It is found in the mitochondrion. The protein resides in the nucleus. The protein localises to the perinuclear region. Co-chaperone for HSPA8/Hsc70. Plays a role in protein transport into mitochondria via its role as co-chaperone. Functions as co-chaperone for HSPA1B and negatively regulates the translocation of BAX from the cytosol to mitochondria in response to cellular stress, thereby protecting cells against apoptosis. Stimulates ATP hydrolysis, but not the folding of unfolded proteins mediated by HSPA1A (in vitro). Promotes apoptosis in response to cellular stress mediated by exposure to anisomycin or UV. This Bos taurus (Bovine) protein is DnaJ homolog subfamily A member 1 (DNAJA1).